The sequence spans 285 residues: MFLLTPVLVAVVCILVVWVFKNADRNLEKKKEEAQVQPWVDEDLKDSTEDLQVEEDAEEWQEAEESVEHIPFSHTRYPEQEMRMRSQEFYELLNKRRSVRFISSEHVPMEVIENVIKAAGTAPSGAHTEPWTFVVVKDPDMKHKIREIIEEEEEINYMKRMGKRWVTDLKKLRTNWIKEYLDTAPVLILIFKQVHGFAANGKKKVHYYNEISVSIACGLLLAALQNAGLVTVTTTPLNCGPRLRVLLGRPSHEKLLVLLPVGYPSRDATVPDLKRKALDQIMVTV.

A helical membrane pass occupies residues 1-21 (MFLLTPVLVAVVCILVVWVFK). FMN is bound by residues 96–100 (RRSVR) and 124–125 (SG). 4 residues coordinate 3,5-diiodo-L-tyrosine: Ala126, Glu153, Tyr157, and Lys178. Ala126, Glu153, Tyr157, and Lys178 together coordinate 3-iodo-L-tyrosine. Residues 233–235 (TTT) and Arg275 contribute to the FMN site.

Belongs to the nitroreductase family. In terms of assembly, homodimer. FMN serves as cofactor.

It localises to the cell membrane. It is found in the cytoplasmic vesicle membrane. The enzyme catalyses 2 iodide + L-tyrosine + 2 NADP(+) = 3,5-diiodo-L-tyrosine + 2 NADPH + H(+). The catalysed reaction is iodide + L-tyrosine + NADP(+) = 3-iodo-L-tyrosine + NADPH. It catalyses the reaction 3-iodo-L-tyrosine + iodide + NADP(+) = 3,5-diiodo-L-tyrosine + NADPH + H(+). It carries out the reaction L-tyrosine + chloride + NADP(+) = 3-chloro-L-tyrosine + NADPH. The enzyme catalyses bromide + L-tyrosine + NADP(+) = 3-bromo-L-tyrosine + NADPH. Catalyzes the dehalogenation of halotyrosines such as 3-bromo-L-tyrosine, 3-chloro-L-tyrosine, 3-iodo-L-tyrosine and 3,5-diiodo-L-tyrosine. During thyroid hormone biosynthesis, facilitates iodide salvage by catalysing the oxidative NADPH-dependent deiodination of the halogenated by-products of thyroid hormone production, monoiodotyrosine (L-MIT) and diiodotyrosine (L-DIT). The scavanged iodide can then reenter the hormone-producing pathways. Acts more efficiently on 3-iodo-L-tyrosine than 3,5-diiodo-L-tyrosine. This chain is Iodotyrosine deiodinase 1 (Iyd), found in Mus musculus (Mouse).